Reading from the N-terminus, the 283-residue chain is NAD kinase (283 aa).

The active-site Proton acceptor is the Asp-69. NAD(+)-binding positions include 69–70 (DG), 138–139 (NE), Lys-166, Asp-168, Leu-176, 179–184 (TAYNLS), and Gln-235.

Belongs to the NAD kinase family. Requires a divalent metal cation as cofactor.

It is found in the cytoplasm. The enzyme catalyses NAD(+) + ATP = ADP + NADP(+) + H(+). In terms of biological role, involved in the regulation of the intracellular balance of NAD and NADP, and is a key enzyme in the biosynthesis of NADP. Catalyzes specifically the phosphorylation on 2'-hydroxyl of the adenosine moiety of NAD to yield NADP. This is NAD kinase from Helicobacter acinonychis (strain Sheeba).